The chain runs to 238 residues: Sugar fermentation stimulation protein homolog (238 aa).

This sequence belongs to the SfsA family.

This Bartonella tribocorum (strain CIP 105476 / IBS 506) protein is Sugar fermentation stimulation protein homolog.